Reading from the N-terminus, the 503-residue chain is Maturase K (503 aa).

It belongs to the intron maturase 2 family. MatK subfamily.

It localises to the plastid. The protein localises to the chloroplast. In terms of biological role, usually encoded in the trnK tRNA gene intron. Probably assists in splicing its own and other chloroplast group II introns. The polypeptide is Maturase K (Kunzea baxteri (Scarlet kunzea)).